The primary structure comprises 97 residues: Mapk-regulated corepressor-interacting protein 1 (97 aa).

Disordered stretches follow at residues 1-29 (MTSS…NEIF) and 72-97 (SNSL…PKKS). Residues 17–28 (ASNTRSPSSNEI) are compositionally biased toward polar residues. Residues 82–97 (DLNDLKRRTVQDPKKS) are compositionally biased toward basic and acidic residues.

It belongs to the MCRIP family.

The protein resides in the nucleus. It is found in the cytoplasm. It localises to the stress granule. Functionally, may play a role in the regulation of the epithelial-mesenchymal transition. This is Mapk-regulated corepressor-interacting protein 1 (Mcrip1) from Xenopus tropicalis (Western clawed frog).